The sequence spans 140 residues: Class I hydrophobin 1 (140 aa).

A signal peptide spans 1–18 (MKFAAVVVLAAAAAAVSA). Positions 22-60 (AQRMARGLPPKAPIRRHGTPADTEKRSHPSSTGGGQCNT) are disordered. Disulfide bonds link C58–C119, C65–C113, C66–C99, and C120–C133.

This sequence belongs to the fungal hydrophobin family. In terms of assembly, self-assembles to form functional amyloid fibrils called rodlets. Self-assembly into fibrillar rodlets occurs spontaneously at hydrophobic:hydrophilic interfaces and the rodlets further associate laterally to form amphipathic monolayers.

The protein resides in the secreted. Its subcellular location is the cell wall. Aerial growth, conidiation, and dispersal of filamentous fungi in the environment rely upon a capability of their secreting small amphipathic proteins called hydrophobins (HPBs) with low sequence identity. Class I can self-assemble into an outermost layer of rodlet bundles on aerial cell surfaces, conferring cellular hydrophobicity that supports fungal growth, development and dispersal; whereas Class II form highly ordered films at water-air interfaces through intermolecular interactions but contribute nothing to the rodlet structure. This Pisolithus tinctorius (Dead man's foot) protein is Class I hydrophobin 1.